Reading from the N-terminus, the 205-residue chain is HTH-type transcriptional regulator PksA (205 aa).

The 61-residue stretch at 8–68 folds into the HTH tetR-type domain; it reads EKRRKQIAEA…FAMKLVQEKV (61 aa). Positions 31–50 form a DNA-binding region, H-T-H motif; that stretch reads SARNIAKEAGLSLGALRHYF.

Transcriptional regulation of the polyketide synthase operon. This is HTH-type transcriptional regulator PksA (pksA) from Bacillus subtilis (strain 168).